The chain runs to 197 residues: Imidazoleglycerol-phosphate dehydratase (197 aa).

This sequence belongs to the imidazoleglycerol-phosphate dehydratase family.

The protein localises to the cytoplasm. It catalyses the reaction D-erythro-1-(imidazol-4-yl)glycerol 3-phosphate = 3-(imidazol-4-yl)-2-oxopropyl phosphate + H2O. It participates in amino-acid biosynthesis; L-histidine biosynthesis; L-histidine from 5-phospho-alpha-D-ribose 1-diphosphate: step 6/9. The chain is Imidazoleglycerol-phosphate dehydratase from Syntrophus aciditrophicus (strain SB).